A 94-amino-acid chain; its full sequence is Large ribosomal subunit protein bL25 (94 aa).

This sequence belongs to the bacterial ribosomal protein bL25 family. Part of the 50S ribosomal subunit; part of the 5S rRNA/L5/L18/L25 subcomplex. Contacts the 5S rRNA. Binds to the 5S rRNA independently of L5 and L18.

Functionally, this is one of the proteins that binds to the 5S RNA in the ribosome where it forms part of the central protuberance. This Escherichia coli O157:H7 protein is Large ribosomal subunit protein bL25.